Here is a 209-residue protein sequence, read N- to C-terminus: Ribonuclease HII (209 aa).

Residues 19-209 (CIIVGVDEVG…LPGITKLYSK (191 aa)) enclose the RNase H type-2 domain. A divalent metal cation is bound by residues Asp25, Glu26, and Asp118.

The protein belongs to the RNase HII family. The cofactor is Mn(2+). Mg(2+) serves as cofactor.

It is found in the cytoplasm. It catalyses the reaction Endonucleolytic cleavage to 5'-phosphomonoester.. In terms of biological role, endonuclease that specifically degrades the RNA of RNA-DNA hybrids. This chain is Ribonuclease HII, found in Ehrlichia canis (strain Jake).